Consider the following 388-residue polypeptide: Flavin oxidoreductase hxnT (388 aa).

Belongs to the NADH:flavin oxidoreductase/NADH oxidase family. FMN serves as cofactor.

Functionally, flavin oxidoreductase, part of the hnx cluster involved in the purine degradation. The nicotinate hydroxylase hnxS accepts nicotinate as a substrate and catalyzes the first step of nicotinate catabolism. The major facilitator-type transporters hxnP and hxnZ are probably involved in the uptake of nicotinate-derived metabolites, and the oxidoreductases hxnT and hxnY in the further metabolism of 6-OH nicotinic acid. The polypeptide is Flavin oxidoreductase hxnT (Emericella nidulans (strain FGSC A4 / ATCC 38163 / CBS 112.46 / NRRL 194 / M139) (Aspergillus nidulans)).